The chain runs to 392 residues: Acetyl-CoA acetyltransferase (392 aa).

Catalysis depends on cysteine 85, which acts as the Acyl-thioester intermediate. Positions 206, 207, 209, and 332 each coordinate CoA. The Proton acceptor role is filled by histidine 336.

The protein belongs to the thiolase-like superfamily. Thiolase family. In terms of assembly, interacts with HMG-CoA synthase (HMGCS) that catalyzes the second step in the pathway and with a DUF35 protein. The acetoacetyl-CoA thiolase/HMG-CoA synthase complex channels the intermediate via a fused CoA-binding site, which allows for efficient coupling of the endergonic thiolase reaction with the exergonic HMGCS reaction.

The enzyme catalyses 2 acetyl-CoA = acetoacetyl-CoA + CoA. Its pathway is metabolic intermediate biosynthesis; (R)-mevalonate biosynthesis; (R)-mevalonate from acetyl-CoA: step 1/3. Its function is as follows. Catalyzes the condensation of two acetyl-coA molecules into acetoacetyl-CoA. Functions in the mevalonate (MVA) pathway leading to isopentenyl diphosphate (IPP), a key precursor for the biosynthesis of isoprenoid compounds that are building blocks of archaeal membrane lipids. This is Acetyl-CoA acetyltransferase from Methanocaldococcus jannaschii (strain ATCC 43067 / DSM 2661 / JAL-1 / JCM 10045 / NBRC 100440) (Methanococcus jannaschii).